A 289-amino-acid polypeptide reads, in one-letter code: ATP phosphoribosyltransferase (289 aa).

This sequence belongs to the ATP phosphoribosyltransferase family. Long subfamily. The cofactor is Mg(2+).

The protein resides in the cytoplasm. The enzyme catalyses 1-(5-phospho-beta-D-ribosyl)-ATP + diphosphate = 5-phospho-alpha-D-ribose 1-diphosphate + ATP. It functions in the pathway amino-acid biosynthesis; L-histidine biosynthesis; L-histidine from 5-phospho-alpha-D-ribose 1-diphosphate: step 1/9. Feedback inhibited by histidine. In terms of biological role, catalyzes the condensation of ATP and 5-phosphoribose 1-diphosphate to form N'-(5'-phosphoribosyl)-ATP (PR-ATP). Has a crucial role in the pathway because the rate of histidine biosynthesis seems to be controlled primarily by regulation of HisG enzymatic activity. This is ATP phosphoribosyltransferase from Solibacter usitatus (strain Ellin6076).